Consider the following 104-residue polypeptide: Large ribosomal subunit protein bL21 (104 aa).

Belongs to the bacterial ribosomal protein bL21 family. Part of the 50S ribosomal subunit. Contacts protein L20.

Functionally, this protein binds to 23S rRNA in the presence of protein L20. The protein is Large ribosomal subunit protein bL21 of Thermodesulfovibrio yellowstonii (strain ATCC 51303 / DSM 11347 / YP87).